Consider the following 218-residue polypeptide: Kappa-scoloptoxin(11)-Ssd1b (218 aa).

A signal peptide spans 1–16 (MFYSHLLFFTFTFACS). A propeptide spanning residues 17-25 (SSLNRKTKR) is cleaved from the precursor.

Contains 8 disulfide bonds. Expressed by the venom gland.

The protein resides in the secreted. In terms of biological role, voltage-gated potassium channel inhibitor. The sequence is that of Kappa-scoloptoxin(11)-Ssd1b from Scolopendra dehaani (Thai centipede).